The chain runs to 213 residues: Chromosome segregation in meiosis protein 2 (213 aa).

The protein belongs to the CSM2 family. In terms of assembly, component of the SHU complex composed of at least CSM2, PSY3, SHU1 and SHU2.

The protein resides in the cytoplasm. Its subcellular location is the nucleus. Functionally, involved in chromosome segregation during meiosis. Promotes efficient recombinational repair and functions in the protection of the genome from spontaneous and induced DNA damage like mutations and gross chromosomal rearrangements (GCRs). The polypeptide is Chromosome segregation in meiosis protein 2 (CSM2) (Saccharomyces cerevisiae (strain ATCC 204508 / S288c) (Baker's yeast)).